The sequence spans 174 residues: Repair DNA polymerase X (174 aa).

Residues 42–51 (REEKMLNDVD) form an involved in ssDNA binding region. Residues D49 and D51 each coordinate Mg(2+). Residues C81 and C86 are joined by a disulfide bond. D100 lines the Mg(2+) pocket.

It belongs to the DNA polymerase type-X family. Mg(2+) serves as cofactor.

The protein resides in the virion. The catalysed reaction is DNA(n) + a 2'-deoxyribonucleoside 5'-triphosphate = DNA(n+1) + diphosphate. Its function is as follows. Error-prone polymerase lacking a proofreading 3'-5' exonuclease which catalyzes the gap-filling reaction during the DNA repair process. Specifically binds intermediates in the single-nucleotide base-excision repair process. Also catalyzes DNA polymerization with low nucleotide-insertion fidelity. Probably acts as a strategic DNA mutase, which gives rise to a rapid emergence of variants. Generates mismatched G-G pairs, in that case, the polymerase first binds the deoxynucleotide followed by mismatch formation. Together with the viral DNA ligase, fills the single nucleotide gaps generated by the AP endonuclease. Binds DNA with high affinity via the helix alphaE. The chain is Repair DNA polymerase X from African swine fever virus (isolate Tick/Malawi/Lil 20-1/1983) (ASFV).